We begin with the raw amino-acid sequence, 150 residues long: MKLPSDIELFELVDKLSLTYFNKHFIDKVYFNTRLRTTGGRYLPSKRVIELNPKYVLESNKEEFYGIIKHELCHYHLHIEGKGYKHGDRDFKELLKATGSPRHCSPLPSQQREYRYKYQCIQCGFVYKRVRKVNMRKYRCGKCRGSLKEI.

In terms of domain architecture, SprT-like spans 11–149; that stretch reads ELVDKLSLTY…CGKCRGSLKE (139 aa). His70 provides a ligand contact to Zn(2+). Glu71 is an active-site residue. A Zn(2+)-binding site is contributed by His74.

This sequence belongs to the SprT family. Zn(2+) is required as a cofactor.

The protein resides in the cytoplasm. In Oceanobacillus iheyensis (strain DSM 14371 / CIP 107618 / JCM 11309 / KCTC 3954 / HTE831), this protein is Protein SprT-like.